Consider the following 32-residue polypeptide: Coenzyme PQQ synthesis protein A (32 aa).

The pyrroloquinoline quinone (Glu-Tyr) cross-link spans 16-20; the sequence is EINMY.

It belongs to the PqqA family.

Its pathway is cofactor biosynthesis; pyrroloquinoline quinone biosynthesis. Its function is as follows. Required for coenzyme pyrroloquinoline quinone (PQQ) biosynthesis. PQQ is probably formed by cross-linking a specific glutamate to a specific tyrosine residue and excising these residues from the peptide. The chain is Coenzyme PQQ synthesis protein A from Dinoroseobacter shibae (strain DSM 16493 / NCIMB 14021 / DFL 12).